Consider the following 191-residue polypeptide: Endoribonuclease YbeY (191 aa).

The Zn(2+) site is built by His-122, His-126, and His-132. A disordered region spans residues 164–191 (QPKPSGPKAFPDAAERAELDKEVPGGGI). A compositionally biased stretch (basic and acidic residues) spans 176–191 (AAERAELDKEVPGGGI).

It belongs to the endoribonuclease YbeY family. Zn(2+) serves as cofactor.

It localises to the cytoplasm. Single strand-specific metallo-endoribonuclease involved in late-stage 70S ribosome quality control and in maturation of the 3' terminus of the 16S rRNA. The polypeptide is Endoribonuclease YbeY (Corynebacterium aurimucosum (strain ATCC 700975 / DSM 44827 / CIP 107346 / CN-1) (Corynebacterium nigricans)).